Here is a 175-residue protein sequence, read N- to C-terminus: ATP synthase subunit b (175 aa).

The helical transmembrane segment at 20-40 (LIFWTAITFVIVLLILKKIAW) threads the bilayer.

This sequence belongs to the ATPase B chain family. As to quaternary structure, F-type ATPases have 2 components, F(1) - the catalytic core - and F(0) - the membrane proton channel. F(1) has five subunits: alpha(3), beta(3), gamma(1), delta(1), epsilon(1). F(0) has four main subunits: a(1), b(2) and c(10-14). The alpha and beta chains form an alternating ring which encloses part of the gamma chain. F(1) is attached to F(0) by a central stalk formed by the gamma and epsilon chains, while a peripheral stalk is formed by the delta and b chains.

It is found in the cell inner membrane. Its function is as follows. F(1)F(0) ATP synthase produces ATP from ADP in the presence of a proton or sodium gradient. F-type ATPases consist of two structural domains, F(1) containing the extramembraneous catalytic core and F(0) containing the membrane proton channel, linked together by a central stalk and a peripheral stalk. During catalysis, ATP synthesis in the catalytic domain of F(1) is coupled via a rotary mechanism of the central stalk subunits to proton translocation. Component of the F(0) channel, it forms part of the peripheral stalk, linking F(1) to F(0). This chain is ATP synthase subunit b, found in Pelodictyon phaeoclathratiforme (strain DSM 5477 / BU-1).